A 365-amino-acid chain; its full sequence is Peptide chain release factor 2 (365 aa).

Glutamine 251 carries the post-translational modification N5-methylglutamine.

The protein belongs to the prokaryotic/mitochondrial release factor family. In terms of processing, methylated by PrmC. Methylation increases the termination efficiency of RF2.

The protein localises to the cytoplasm. Its function is as follows. Peptide chain release factor 2 directs the termination of translation in response to the peptide chain termination codons UGA and UAA. This Campylobacter jejuni subsp. doylei (strain ATCC BAA-1458 / RM4099 / 269.97) protein is Peptide chain release factor 2.